Consider the following 186-residue polypeptide: NADH-quinone oxidoreductase subunit C (186 aa).

Residues 166–186 form a disordered region; that stretch reads DSLTPWKGVGRPSDPFDGRKE.

The protein belongs to the complex I 30 kDa subunit family. NDH-1 is composed of 14 different subunits. Subunits NuoB, C, D, E, F, and G constitute the peripheral sector of the complex.

The protein resides in the cell inner membrane. The catalysed reaction is a quinone + NADH + 5 H(+)(in) = a quinol + NAD(+) + 4 H(+)(out). Its function is as follows. NDH-1 shuttles electrons from NADH, via FMN and iron-sulfur (Fe-S) centers, to quinones in the respiratory chain. The immediate electron acceptor for the enzyme in this species is believed to be ubiquinone. Couples the redox reaction to proton translocation (for every two electrons transferred, four hydrogen ions are translocated across the cytoplasmic membrane), and thus conserves the redox energy in a proton gradient. The polypeptide is NADH-quinone oxidoreductase subunit C (Neorickettsia sennetsu (strain ATCC VR-367 / Miyayama) (Ehrlichia sennetsu)).